A 2046-amino-acid polypeptide reads, in one-letter code: Protein TIC 214 (2046 aa).

6 consecutive transmembrane segments (helical) span residues 18–38 (VSGP…LPFG), 54–74 (LYGI…FLSM), 79–99 (IYAA…YTFC), 125–145 (ILSL…LLAN), 163–183 (ISFM…FINL), and 214–234 (TFSV…PLIF). Disordered stretches follow at residues 278 to 299 (DEDR…EDRS), 320 to 472 (ARSV…VPRE), and 1833 to 1898 (AKDS…EDEI). Composition is skewed to basic and acidic residues over residues 322 to 335 (SVAE…EHRS), 344 to 368 (SVAE…RSVA), and 378 to 457 (AKKD…RSVA). A compositionally biased stretch (low complexity) spans 1833 to 1866 (AKDSNANDINAKDSNANDINANDSNAKDSNANDI). Positions 1882–1898 (NAKDSNADVPKKKEDEI) are enriched in basic and acidic residues.

The protein belongs to the TIC214 family. As to quaternary structure, part of the Tic complex.

Its subcellular location is the plastid. The protein localises to the chloroplast inner membrane. Functionally, involved in protein precursor import into chloroplasts. May be part of an intermediate translocation complex acting as a protein-conducting channel at the inner envelope. In Pinus koraiensis (Korean pine), this protein is Protein TIC 214.